The primary structure comprises 312 residues: RNA-binding protein Raly (312 aa).

N-acetylserine is present on S2. A Glycyl lysine isopeptide (Lys-Gly) (interchain with G-Cter in SUMO2) cross-link involves residue K4. The RRM domain occupies 21-92 (SRVFIGNLNT…QTLDINMAGE (72 aa)). K44 bears the N6-acetyllysine mark. Residues K94 and K99 each participate in a glycyl lysine isopeptide (Lys-Gly) (interchain with G-Cter in SUMO2) cross-link. The residue at position 135 (S135) is a Phosphoserine. Residue K159 forms a Glycyl lysine isopeptide (Lys-Gly) (interchain with G-Cter in SUMO2) linkage. Position 165 is an N6-acetyllysine; alternate (K165). A Glycyl lysine isopeptide (Lys-Gly) (interchain with G-Cter in SUMO2); alternate cross-link involves residue K165. Glycyl lysine isopeptide (Lys-Gly) (interchain with G-Cter in SUMO2) cross-links involve residues K179 and K191. Residues 184–216 (SSELQTIKTELTQIKSNIDALLGRLEQIAEEQK) adopt a coiled-coil conformation. A compositionally biased stretch (basic and acidic residues) spans 214 to 226 (EQKANPDGKKKGD). The interval 214-312 (EQKANPDGKK…DTDAEDGALQ (99 aa)) is disordered. Residues 228–253 (SSGGGGGSSGGGGSSNVGGGSSGGSG) show a composition bias toward gly residues. Residue T268 is modified to Phosphothreonine. A Phosphoserine modification is found at S270. Residues T274 and T292 each carry the phosphothreonine modification. Basic and acidic residues predominate over residues 293-303 (HSEEELEHSQD). S294 and S301 each carry phosphoserine. At T304 the chain carries Phosphothreonine.

It belongs to the RRM HNRPC family. RALY subfamily. As to quaternary structure, identified in the spliceosome C complex. Interacts (through its RNA-binding domain) with FUS (through its RNA-binding domain); both are components of the same RNPs. Widely expressed. Expressed in brain, testis, lung, spleen and kidney. Weakly expressed in liver.

The protein resides in the nucleus. Its function is as follows. RNA-binding protein that acts as a transcriptional cofactor for cholesterol biosynthetic genes in the liver. Binds the lipid-responsive non-coding RNA LeXis and is required for LeXis-mediated effect on cholesterogenesis. May be a heterogeneous nuclear ribonucleoprotein (hnRNP). This chain is RNA-binding protein Raly (Raly), found in Mus musculus (Mouse).